A 163-amino-acid chain; its full sequence is Protein-export protein SecB (163 aa).

Belongs to the SecB family. As to quaternary structure, homotetramer, a dimer of dimers. One homotetramer interacts with 1 SecA dimer.

The protein resides in the cytoplasm. In terms of biological role, one of the proteins required for the normal export of preproteins out of the cell cytoplasm. It is a molecular chaperone that binds to a subset of precursor proteins, maintaining them in a translocation-competent state. It also specifically binds to its receptor SecA. In Brucella anthropi (strain ATCC 49188 / DSM 6882 / CCUG 24695 / JCM 21032 / LMG 3331 / NBRC 15819 / NCTC 12168 / Alc 37) (Ochrobactrum anthropi), this protein is Protein-export protein SecB.